The following is a 346-amino-acid chain: Pheromone receptor 2 (346 aa).

The next 7 helical transmembrane spans lie at V8–H28, I34–A54, L71–L94, L115–V135, F160–V180, V219–L239, and L270–L290.

The protein belongs to the G-protein coupled receptor 4 family.

The protein localises to the membrane. Functionally, receptor for the A1 pheromone, a prenylated mating factor. This chain is Pheromone receptor 2 (PRA2), found in Mycosarcoma maydis (Corn smut fungus).